The primary structure comprises 321 residues: Fimbria adhesin protein (321 aa).

The signal sequence occupies residues methionine 1–alanine 18.

Belongs to the fimbrial protein family.

It localises to the fimbrium. This Klebsiella pneumoniae protein is Fimbria adhesin protein (mrkD).